A 6907-amino-acid chain; its full sequence is Fibrous sheath-interacting protein 2 (6907 aa).

Positions 273-292 (EERIEEQQHRNREESDRKKQ) are disordered. A Phosphoserine modification is found at Ser430. Disordered stretches follow at residues 439-472 (SQAF…ESGP), 954-990 (FQKS…RPFP), 1545-1573 (VQED…TKEM), 3202-3257 (VSSD…FDQT), 5650-5672 (RTSS…EHHS), 5725-5781 (SAQS…KPGI), 5850-5880 (DKGN…EAPS), and 6852-6874 (GSAN…KQGS). Positions 445–460 (PSKEEKETNADWDGRP) are enriched in basic and acidic residues. Over residues 954 to 966 (FQKSRQPRISSPS) the composition is skewed to polar residues. Basic and acidic residues-rich tracts occupy residues 1545 to 1555 (VQEDNKEETKS) and 3213 to 3229 (SVED…RPDS). The segment covering 5728–5741 (SVTTKKVSSSTNKN) has biased composition (low complexity). The stretch at 5738-5766 (TNKNISAKEKEEEEREKEKVREEIKSEPS) forms a coiled coil. A compositionally biased stretch (basic and acidic residues) spans 5743 to 5778 (SAKEKEEEEREKEKVREEIKSEPSKPDDPQNQRESK).

In terms of assembly, may interact with AKAP4. In terms of tissue distribution, predominantly expressed in testis.

Its function is as follows. Plays a role in spermatogenesis. The protein is Fibrous sheath-interacting protein 2 (FSIP2) of Homo sapiens (Human).